A 180-amino-acid polypeptide reads, in one-letter code: Acireductone dioxygenase (180 aa).

The Fe(2+) site is built by histidine 97, histidine 99, glutamate 103, and histidine 141. 4 residues coordinate Ni(2+): histidine 97, histidine 99, glutamate 103, and histidine 141.

This sequence belongs to the acireductone dioxygenase (ARD) family. In terms of assembly, monomer. It depends on Fe(2+) as a cofactor. Ni(2+) serves as cofactor.

The catalysed reaction is 1,2-dihydroxy-5-(methylsulfanyl)pent-1-en-3-one + O2 = 3-(methylsulfanyl)propanoate + CO + formate + 2 H(+). It catalyses the reaction 1,2-dihydroxy-5-(methylsulfanyl)pent-1-en-3-one + O2 = 4-methylsulfanyl-2-oxobutanoate + formate + 2 H(+). The protein operates within amino-acid biosynthesis; L-methionine biosynthesis via salvage pathway; L-methionine from S-methyl-5-thio-alpha-D-ribose 1-phosphate: step 5/6. Functionally, catalyzes 2 different reactions between oxygen and the acireductone 1,2-dihydroxy-3-keto-5-methylthiopentene (DHK-MTPene) depending upon the metal bound in the active site. Fe-containing acireductone dioxygenase (Fe-ARD) produces formate and 2-keto-4-methylthiobutyrate (KMTB), the alpha-ketoacid precursor of methionine in the methionine recycle pathway. Ni-containing acireductone dioxygenase (Ni-ARD) produces methylthiopropionate, carbon monoxide and formate, and does not lie on the methionine recycle pathway. The polypeptide is Acireductone dioxygenase (Citrobacter koseri (strain ATCC BAA-895 / CDC 4225-83 / SGSC4696)).